Here is a 483-residue protein sequence, read N- to C-terminus: Kynureninase 1 (483 aa).

Pyridoxal 5'-phosphate is bound by residues L147, T148, 175-178 (FPSD), S232, D261, H264, and Y286. K287 is subject to N6-(pyridoxal phosphate)lysine. Residues W326 and N354 each contribute to the pyridoxal 5'-phosphate site.

The protein belongs to the kynureninase family. In terms of assembly, homodimer. Pyridoxal 5'-phosphate is required as a cofactor.

Its subcellular location is the cytoplasm. The catalysed reaction is L-kynurenine + H2O = anthranilate + L-alanine + H(+). It carries out the reaction 3-hydroxy-L-kynurenine + H2O = 3-hydroxyanthranilate + L-alanine + H(+). It participates in amino-acid degradation; L-kynurenine degradation; L-alanine and anthranilate from L-kynurenine: step 1/1. Its pathway is cofactor biosynthesis; NAD(+) biosynthesis; quinolinate from L-kynurenine: step 2/3. Catalyzes the cleavage of L-kynurenine (L-Kyn) and L-3-hydroxykynurenine (L-3OHKyn) into anthranilic acid (AA) and 3-hydroxyanthranilic acid (3-OHAA), respectively. The chain is Kynureninase 1 (bna5-1) from Aspergillus terreus (strain NIH 2624 / FGSC A1156).